The chain runs to 237 residues: Probable F-box protein At1g53815 (237 aa).

The F-box domain maps to isoleucine 41–tyrosine 72.

The chain is Probable F-box protein At1g53815 from Arabidopsis thaliana (Mouse-ear cress).